The sequence spans 394 residues: MNKPAVIALVITLLDAMGIGLIMPVLPSLLREYLPEADVANHYGILLALYAVMQVCFAPLLGRWSDKLGRRPVLLLSLAGAAFDYTLLALSNVLWMLYLGRIISGITGATGAVAASVVADSTAVSERTAWFGRLGAAFGAGLIAGPAIGGLAGDISPHLPFVIAAILNACTFLMVFFIFKPAVQTEEKPADEKQESAGISFITLLKPLALLLFVFFTAQLIGQIPATVWVLFTESRFAWDSAAVGFSLAGLGAMHALFQAVVAGALAKRLSEKTIIFAGFIADATAFLLMSAITSGWMVYPVLILLAGGGIALPALQGIISAGASAANQGKLQGVLVSLTNLTGVAGPLLFAFIFSQTQQSADGTVWLIGTALYGLLLAICLLIRKPAPVAATC.

The next 12 helical transmembrane spans lie at 6–26 (VIAL…MPVL), 42–62 (HYGI…PLLG), 73–93 (VLLL…LSNV), 94–114 (LWML…GAVA), 135–155 (GAAF…AGDI), 159–179 (LPFV…FFIF), 198–218 (GISF…FFTA), 243–263 (AVGF…AVVA), 274–294 (TIIF…SAIT), 296–316 (GWMV…LPAL), 335–355 (VLVS…AFIF), and 364–384 (GTVW…CLLI).

This sequence belongs to the major facilitator superfamily. TCR/Tet family.

It is found in the cell inner membrane. Functionally, resistance to tetracycline by an active tetracycline efflux. This is an energy-dependent process that decreases the accumulation of the antibiotic in whole cells. This protein functions as a metal-tetracycline/H(+) antiporter. The protein is Tetracycline resistance protein, class D (tetA) of Salmonella ordonez.